The primary structure comprises 319 residues: HTH-type transcriptional regulator YidZ (319 aa).

One can recognise an HTH lysR-type domain in the interval 8–65 (LDLNLLLCLQLLMQERSVTKAAKRMNVTPSAVSKSLAKLRAWFDDPLFVNTPLGLAPT). Positions 25-44 (VTKAAKRMNVTPSAVSKSLA) form a DNA-binding region, H-T-H motif.

The protein belongs to the LysR transcriptional regulatory family.

Its function is as follows. Involved in anaerobic NO protection. This chain is HTH-type transcriptional regulator YidZ, found in Salmonella agona (strain SL483).